The primary structure comprises 169 residues: Photosystem I assembly protein Ycf3 (169 aa).

3 TPR repeats span residues 35–68, 72–105, and 120–153; these read AFSYYRDGMSAQSEGEYAEALQNYYEAMRLEIDP, SYILYNIGLIHTSNGQHTKALEYYLQALERNPAL, and GEQAIQQGDPENAEAWFDQAADYWKQGIALAPSN.

It belongs to the Ycf3 family.

It is found in the plastid. The protein resides in the chloroplast thylakoid membrane. Its function is as follows. Essential for the assembly of the photosystem I (PSI) complex. May act as a chaperone-like factor to guide the assembly of the PSI subunits. The protein is Photosystem I assembly protein Ycf3 of Chaetosphaeridium globosum (Charophycean green alga).